We begin with the raw amino-acid sequence, 196 residues long: uncharacterized protein (196 aa).

This is an uncharacterized protein from Sinorhizobium fredii (strain NBRC 101917 / NGR234).